The chain runs to 1241 residues: High-affinity potassium transport protein (1241 aa).

2 consecutive transmembrane segments (helical) span residues 49–70 (NFIA…ILLY) and 78–98 (IDAL…TVDV). Residue N100 is glycosylated (N-linked (GlcNAc...) asparagine). A helical transmembrane segment spans residues 107 to 127 (IILYIICCISTPIAVHSCLAF). Disordered stretches follow at residues 162–241 (TART…SLDD), 253–316 (KYHG…TPED), and 329–570 (EGTA…QLQQ). Polar residues predominate over residues 164-177 (RTMTKSKTGGTQRV). Basic and acidic residues-rich tracts occupy residues 181–191 (GKSDKRDDFQE) and 199–214 (VNRD…HNSR). Over residues 215-238 (DSNSNANTNSSNNNSINHNGSSGS) the composition is skewed to low complexity. N223, N227, N233, N257, N274, N353, and N364 each carry an N-linked (GlcNAc...) asparagine glycan. Polar residues-rich tracts occupy residues 268 to 280 (NTAT…QKLK) and 345 to 365 (TDGT…TMNE). A compositionally biased stretch (basic and acidic residues) spans 366–375 (SKIRIQDKGA). The segment covering 380–411 (DQDSVLHSSNSSACTSDEDSLPTNFGGTTPSL) has biased composition (polar residues). N389 and N442 each carry an N-linked (GlcNAc...) asparagine glycan. 2 stretches are compositionally biased toward basic residues: residues 446-455 (PPRKASKSKR) and 482-497 (HLPK…KRRL). The segment covering 498–509 (STGSIDKNSSSD) has biased composition (polar residues). 2 N-linked (GlcNAc...) asparagine glycosylation sites follow: N505 and N538. A compositionally biased stretch (acidic residues) spans 520-545 (NDDDDGNEGDNMEEYFADNESGDEDD). Low complexity predominate over residues 561 to 570 (KQQQQHQLQQ). 5 N-linked (GlcNAc...) asparagine glycosylation sites follow: N584, N660, N681, N691, and N741. Residues 677–714 (NSHRNGSEDVSSDSNETTYPLNGNNDHSQNDANGYPTY) are disordered. Polar residues predominate over residues 684–708 (EDVSSDSNETTYPLNGNNDHSQNDA). 5 helical membrane passes run 784 to 806 (ILVV…WINL), 819 to 840 (VSPT…GLTL), 844 to 864 (SMMS…FIII), 868 to 888 (GFPI…PDLS), and 904 to 924 (CFTL…LVGL). A glycan (N-linked (GlcNAc...) asparagine) is linked at N925. A run of 2 helical transmembrane segments spans residues 929 to 949 (WILF…SKGY) and 977 to 997 (SIQV…AISI). A disordered region spans residues 1011–1073 (YGEMGGKPED…ENENPNEEST (63 aa)). Residues 1021 to 1041 (TDTEEDGDCDDEDDDNEEEES) show a composition bias toward acidic residues. Basic residues predominate over residues 1050–1062 (GKSKKETKKKKKR). 2 consecutive transmembrane segments (helical) span residues 1084–1104 (QLSF…ICER) and 1117–1137 (VFTI…SLGY). Residue N1141 is glycosylated (N-linked (GlcNAc...) asparagine). The disordered stretch occupies residues 1222–1241 (DELKHKRSLSRSSKRSTKTN). Basic residues predominate over residues 1226–1241 (HKRSLSRSSKRSTKTN).

It belongs to the TrkH potassium transport family.

Its subcellular location is the membrane. Functionally, this protein is required for high-affinity potassium transport. The sequence is that of High-affinity potassium transport protein (TRK1) from Saccharomyces uvarum (Yeast).